Reading from the N-terminus, the 643-residue chain is Phosphatidylinositol-3,5-bisphosphate 3-phosphatase MTMR2 (643 aa).

Polar residues-rich tracts occupy residues 1 to 12 (MEKSSSCESLGS) and 23 to 40 (DSLS…VHTK). The segment at 1–54 (MEKSSSCESLGSQPAVARPPSVDSLSSASTSHSENSVHTKSASVVSSDSISTSA) is disordered. Phosphoserine occurs at positions 6 and 9. A compositionally biased stretch (low complexity) spans 41–54 (SASVVSSDSISTSA). The residue at position 58 (serine 58) is a Phosphoserine. The GRAM domain maps to 68-139 (NKLAEMEEPP…GVISRVEKIG (72 aa)). Residues 205-580 (GWKLYDSLSE…RHLELWVGYY (376 aa)) form the Myotubularin phosphatase domain. Residues asparagine 330, asparagine 355, and isoleucine 356 each coordinate a 1,2-diacyl-sn-glycero-3-phospho-(1D-myo-inositol-3,5-bisphosphate). Residues asparagine 330, asparagine 355, and isoleucine 356 each coordinate a 1,2-diacyl-sn-glycero-3-phospho-(1D-myo-inositol-3-phosphate). Cysteine 417 functions as the Phosphocysteine intermediate in the catalytic mechanism. A 1,2-diacyl-sn-glycero-3-phospho-(1D-myo-inositol-3,5-bisphosphate) contacts are provided by serine 418, aspartate 419, glycine 420, tryptophan 421, aspartate 422, arginine 423, arginine 459, and arginine 463. Positions 418, 419, 420, 421, 422, and 423 each coordinate a 1,2-diacyl-sn-glycero-3-phospho-(1D-myo-inositol-3-phosphate). Arginine 463 is a binding site for a 1,2-diacyl-sn-glycero-3-phospho-(1D-myo-inositol-3-phosphate). A coiled-coil region spans residues 593–627 (IHNRYKELLAKRAELQKKVEELQREISNRSTSSSE). The disordered stretch occupies residues 614 to 643 (LQREISNRSTSSSERAGSPAQCVTPVQTVV).

This sequence belongs to the protein-tyrosine phosphatase family. Non-receptor class myotubularin subfamily. As to quaternary structure, homodimer (via coiled-coil domain). Heterotetramer consisting of one MTMR2 dimer and one SBF2/MTMR13 dimer; specifically in peripheral nerves stabilizes SBF2/MTMR13 at the membranes and increases MTMR2 catalytic activity towards phosphatidylinositol 3,5-bisphosphate and to a lesser extent towards phosphatidylinositol 3-phosphate. Heterodimer with SBF1/MTMR5; acts as an adapter for the phosphatase MTMR2 to regulate MTMR2 catalytic activity and subcellular location. Heterodimer with MTMR12. In terms of processing, phosphorylation at Ser-58 decreases MTMR2 localization to endocytic vesicular structures.

The protein resides in the cytoplasm. The protein localises to the early endosome membrane. Its subcellular location is the perinuclear region. It is found in the cell projection. It localises to the axon. The protein resides in the endosome membrane. It carries out the reaction a 1,2-diacyl-sn-glycero-3-phospho-(1D-myo-inositol-3,5-bisphosphate) + H2O = a 1,2-diacyl-sn-glycero-3-phospho-(1D-myo-inositol-5-phosphate) + phosphate. The enzyme catalyses a 1,2-diacyl-sn-glycero-3-phospho-(1D-myo-inositol-3-phosphate) + H2O = a 1,2-diacyl-sn-glycero-3-phospho-(1D-myo-inositol) + phosphate. The catalysed reaction is 1,2-dioctanoyl-sn-glycero-3-phospho-(1-D-myo-inositol-3-phosphate) + H2O = 1,2-dioctanoyl-sn-glycero-3-phospho-(1D-myo-inositol) + phosphate. It catalyses the reaction 1,2-dioctanoyl-sn-glycero-3-phospho-(1D-myo-inositol-3,5-bisphosphate) + H2O = 1,2-dioctanoyl-sn-glycero-3-phospho-(1D-myo-inositol-5-phosphate) + phosphate. Its function is as follows. Lipid phosphatase that specifically dephosphorylates the D-3 position of phosphatidylinositol 3-phosphate and phosphatidylinositol 3,5-bisphosphate, generating phosphatidylinositol and phosphatidylinositol 5-phosphate. Regulates the level of these phosphoinositides critical for various biological processes including autophagy initiation and autophagosome maturation. This chain is Phosphatidylinositol-3,5-bisphosphate 3-phosphatase MTMR2, found in Bos taurus (Bovine).